Consider the following 314-residue polypeptide: Small ribosomal subunit biogenesis GTPase RsgA (314 aa).

Positions 1–21 are disordered; sequence MKRAPTKQPAKPAARGGERAQ. A CP-type G domain is found at 85 to 246; sequence SDQFKSKLFA…LIDSPGFQEF (162 aa). GTP contacts are provided by residues 134–137 and 188–196; these read NKID and GQSGMGKST. Residues Cys270, Cys275, His277, and Cys283 each contribute to the Zn(2+) site.

The protein belongs to the TRAFAC class YlqF/YawG GTPase family. RsgA subfamily. In terms of assembly, monomer. Associates with 30S ribosomal subunit, binds 16S rRNA. Zn(2+) serves as cofactor.

The protein localises to the cytoplasm. One of several proteins that assist in the late maturation steps of the functional core of the 30S ribosomal subunit. Helps release RbfA from mature subunits. May play a role in the assembly of ribosomal proteins into the subunit. Circularly permuted GTPase that catalyzes slow GTP hydrolysis, GTPase activity is stimulated by the 30S ribosomal subunit. This chain is Small ribosomal subunit biogenesis GTPase RsgA, found in Burkholderia mallei (strain ATCC 23344).